The chain runs to 790 residues: Accumulates dyads protein 3 (790 aa).

Residues 8 to 122 (LNKPESLKEQ…NTLKSPNKFL (115 aa)) are disordered. Over residues 39–49 (PESKPFRERRS) the composition is skewed to basic and acidic residues. Composition is skewed to polar residues over residues 50–78 (QTWIDSEVPTSTEKSNVQESISSDIISKL) and 89–108 (ESWAGSEASSPSGNISTLEN). Coiled coils occupy residues 241–328 (ISKE…REEK), 361–430 (LVSE…RLND), 477–498 (KNLENMEQYKQLKGKIELLEKN), and 540–658 (QQFR…LKKL).

In terms of assembly, interacts directly with SSP1. Probable component of a SPB complex composed of ADY3, SSP1, DON1, MPC54, SPO21/MPC70, NUD1 and CNM67. Post-translationally, phosphorylated.

Its subcellular location is the prospore membrane. The protein resides in the cytoplasm. It localises to the cytoskeleton. The protein localises to the microtubule organizing center. It is found in the spindle pole body. Its function is as follows. Involved in the pathway that organizes the prospore membrane (PSM) during sporulation. Mediates the assembly of the DON1 ring structure at the leading edge of PSM during meiosis II. May constitute a physical link between SSP1-containing PSM precursors and the spindle pole body (SPB) and may facilitate the recruitment of other factors that are required to promote spore wall formation. This Saccharomyces cerevisiae (strain ATCC 204508 / S288c) (Baker's yeast) protein is Accumulates dyads protein 3 (ADY3).